The following is a 262-amino-acid chain: uncharacterized protein (262 aa).

The next 6 membrane-spanning stretches (helical) occupy residues 7 to 27 (LAVAISFFVFGASVLYSLAHM), 58 to 78 (DTLGECLVLVVAVMVSWIVFG), 114 to 134 (FLAFPMSVLMVALGIITVLGG), 140 to 160 (GGFQGGALIAAAFILSVIAFG), 179 to 199 (GALGYLLLGVAGMFIGGYYLF), and 216 to 236 (IITAGIIPYLNIAVGLKVLAG).

The protein resides in the cell membrane. This is an uncharacterized protein from Methanocaldococcus jannaschii (strain ATCC 43067 / DSM 2661 / JAL-1 / JCM 10045 / NBRC 100440) (Methanococcus jannaschii).